We begin with the raw amino-acid sequence, 116 residues long: U16-barytoxin-Tl1a (116 aa).

The signal sequence occupies residues 1-20 (MKTIIVFLSLLVLATKFGDA). A propeptide spanning residues 21-74 (KEGVNQEQKKEVTQNEFRVEYLNEMAAMSLLQQLEAIESALFEKEAGRNSRQKR) is cleaved from the precursor. Cystine bridges form between Cys75-Cys90, Cys82-Cys95, and Cys89-Cys110.

It belongs to the neurotoxin 14 (magi-1) family. 06 (ICK-Trit) subfamily. In terms of tissue distribution, expressed by the venom gland.

It is found in the secreted. Functionally, ion channel inhibitor. The protein is U16-barytoxin-Tl1a of Trittame loki (Brush-footed trapdoor spider).